Consider the following 442-residue polypeptide: Proline--tRNA ligase (442 aa).

This sequence belongs to the class-II aminoacyl-tRNA synthetase family. ProS type 2 subfamily. As to quaternary structure, homodimer.

It localises to the cytoplasm. It catalyses the reaction tRNA(Pro) + L-proline + ATP = L-prolyl-tRNA(Pro) + AMP + diphosphate. Catalyzes the attachment of proline to tRNA(Pro) in a two-step reaction: proline is first activated by ATP to form Pro-AMP and then transferred to the acceptor end of tRNA(Pro). The polypeptide is Proline--tRNA ligase (Chelativorans sp. (strain BNC1)).